A 138-amino-acid polypeptide reads, in one-letter code: Cysteine desulfuration protein SufE (138 aa).

C51 (cysteine persulfide intermediate) is an active-site residue.

The protein belongs to the SufE family. As to quaternary structure, homodimer. Interacts with SufS.

The protein localises to the cytoplasm. Its pathway is cofactor biosynthesis; iron-sulfur cluster biosynthesis. Its function is as follows. Participates in cysteine desulfuration mediated by SufS. Cysteine desulfuration mobilizes sulfur from L-cysteine to yield L-alanine and constitutes an essential step in sulfur metabolism for biosynthesis of a variety of sulfur-containing biomolecules. Functions as a sulfur acceptor for SufS, by mediating the direct transfer of the sulfur atom from the S-sulfanylcysteine of SufS, an intermediate product of cysteine desulfuration process. The chain is Cysteine desulfuration protein SufE from Pectobacterium atrosepticum (strain SCRI 1043 / ATCC BAA-672) (Erwinia carotovora subsp. atroseptica).